The chain runs to 133 residues: Ribonuclease P protein component (133 aa).

It belongs to the RnpA family. As to quaternary structure, consists of a catalytic RNA component (M1 or rnpB) and a protein subunit.

It carries out the reaction Endonucleolytic cleavage of RNA, removing 5'-extranucleotides from tRNA precursor.. RNaseP catalyzes the removal of the 5'-leader sequence from pre-tRNA to produce the mature 5'-terminus. It can also cleave other RNA substrates such as 4.5S RNA. The protein component plays an auxiliary but essential role in vivo by binding to the 5'-leader sequence and broadening the substrate specificity of the ribozyme. This is Ribonuclease P protein component from Corynebacterium efficiens (strain DSM 44549 / YS-314 / AJ 12310 / JCM 11189 / NBRC 100395).